The primary structure comprises 748 residues: CCR4-NOT transcription complex subunit 10-B (748 aa).

The span at 1–16 shows a compositional bias: basic and acidic residues; that stretch reads MAADKAGEQGAEKHEG. Disordered regions lie at residues 1–25, 483–524, and 605–634; these read MAAD…GISD, KQEN…PPSS, and VSLG…KQIP. 2 stretches are compositionally biased toward polar residues: residues 487-509 and 605-615; these read GSKA…VCSN and VSLGVSSNEQE.

This sequence belongs to the CNOT10 family. As to quaternary structure, component of the CCR4-NOT complex. cnot10 and cnot11 form a subcomplex docked to the cnot1 scaffold.

It is found in the cytoplasm. The protein localises to the nucleus. In terms of biological role, component of the CCR4-NOT complex which is one of the major cellular mRNA deadenylases and is linked to various cellular processes including bulk mRNA degradation, miRNA-mediated repression, translational repression during translational initiation and general transcription regulation. Additional complex functions may be a consequence of its influence on mRNA expression. Is not required for association of CNOT7 to the CCR4-NOT complex. This is CCR4-NOT transcription complex subunit 10-B (cnot10-b) from Xenopus laevis (African clawed frog).